We begin with the raw amino-acid sequence, 110 residues long: Nucleoid-associated protein Sfri_2406 (110 aa).

The protein belongs to the YbaB/EbfC family. Homodimer.

The protein resides in the cytoplasm. The protein localises to the nucleoid. Functionally, binds to DNA and alters its conformation. May be involved in regulation of gene expression, nucleoid organization and DNA protection. The protein is Nucleoid-associated protein Sfri_2406 of Shewanella frigidimarina (strain NCIMB 400).